Consider the following 417-residue polypeptide: Serine--tRNA ligase (417 aa).

232–234 is an L-serine binding site; the sequence is TAE. ATP is bound by residues 263 to 265 and V279; that span reads RRE. Residue E286 coordinates L-serine. 350–353 provides a ligand contact to ATP; it reads EISS. L-serine is bound at residue S385.

It belongs to the class-II aminoacyl-tRNA synthetase family. Type-1 seryl-tRNA synthetase subfamily. Homodimer. The tRNA molecule binds across the dimer.

The protein resides in the cytoplasm. It catalyses the reaction tRNA(Ser) + L-serine + ATP = L-seryl-tRNA(Ser) + AMP + diphosphate + H(+). The catalysed reaction is tRNA(Sec) + L-serine + ATP = L-seryl-tRNA(Sec) + AMP + diphosphate + H(+). It functions in the pathway aminoacyl-tRNA biosynthesis; selenocysteinyl-tRNA(Sec) biosynthesis; L-seryl-tRNA(Sec) from L-serine and tRNA(Sec): step 1/1. In terms of biological role, catalyzes the attachment of serine to tRNA(Ser). Is also able to aminoacylate tRNA(Sec) with serine, to form the misacylated tRNA L-seryl-tRNA(Sec), which will be further converted into selenocysteinyl-tRNA(Sec). This Leptospira borgpetersenii serovar Hardjo-bovis (strain JB197) protein is Serine--tRNA ligase.